The chain runs to 217 residues: Formate dehydrogenase, nitrate-inducible, cytochrome b556(Fdn) subunit (217 aa).

The Cytoplasmic portion of the chain corresponds to 1–11 (MSKSKMIVRTK). Residues 12–36 (FIDRACHWTVVICFFLVALSGISFF) form a helical membrane-spanning segment. H18 serves as a coordination point for heme b. At 37-52 (FPTLQWLTQTFGTPQM) the chain is on the periplasmic side. Residues 53-74 (GRILHPFFGIAIFVALMFMFVR) traverse the membrane as a helical segment. H57 contributes to the heme b binding site. Over 75–110 (FVHHNIPDKKDIPWLLNIVEVLKGNEHKVADVGKYN) the chain is Cytoplasmic. A helical membrane pass occupies residues 111–134 (AGQKMMFWSIMSMIFVLLVTGVII). Over 135–150 (WRPYFAQYFPMQVVRY) the chain is Periplasmic. The chain crosses the membrane as a helical span at residues 151–175 (SLLIHAAAGIILIHAILIHMYMAFW). Positions 155 and 169 each coordinate heme b. Residue H169 participates in a menaquinone binding. The Cytoplasmic portion of the chain corresponds to 176-217 (VKGSIKGMIEGKVSRRWAKKHHPRWYREIEKAEAKKESEEGI).

Belongs to the formate dehydrogenase gamma subunit family. Trimer of heterotrimers, consisting of subunits alpha, beta and gamma. The cofactor is heme.

It localises to the cell inner membrane. Functionally, formate dehydrogenase allows the bacterium to use formate as major electron donor during anaerobic respiration, when nitrate is used as electron acceptor. Subunit gamma is the cytochrome b556 component of the formate dehydrogenase-N, and also contains a menaquinone reduction site that receives electrons from the beta subunit (FdnH), through its hemes. Formate dehydrogenase-N is part of a system that generates proton motive force, together with the dissimilatory nitrate reductase (Nar). The protein is Formate dehydrogenase, nitrate-inducible, cytochrome b556(Fdn) subunit (fdnI) of Escherichia coli O157:H7.